The following is a 356-amino-acid chain: Peptide chain release factor 1 (356 aa).

Q232 bears the N5-methylglutamine mark. The disordered stretch occupies residues 281-301; the sequence is ERQSSELSADRKAQVGSGDRS.

This sequence belongs to the prokaryotic/mitochondrial release factor family. Methylated by PrmC. Methylation increases the termination efficiency of RF1.

The protein localises to the cytoplasm. In terms of biological role, peptide chain release factor 1 directs the termination of translation in response to the peptide chain termination codons UAG and UAA. This chain is Peptide chain release factor 1, found in Desulfovibrio desulfuricans (strain ATCC 27774 / DSM 6949 / MB).